A 394-amino-acid chain; its full sequence is Na(+)/H(+) antiporter NhaA (394 aa).

11 helical membrane passes run 14 to 34 (AGGL…NSAL), 59 to 79 (LLLW…GLEV), 95 to 115 (VFPA…YLLF), 125 to 145 (GWAI…ALLG), 154 to 174 (VFLL…IALF), 179 to 199 (VSLQ…YMNW), 213 to 233 (LVLW…GVIV), 254 to 274 (GLHP…NAGV), 292 to 312 (IATG…WLAV), 328 to 348 (IFAV…IASL), and 363 to 383 (LGIL…LRLV).

It belongs to the NhaA Na(+)/H(+) (TC 2.A.33) antiporter family.

The protein resides in the cell inner membrane. It catalyses the reaction Na(+)(in) + 2 H(+)(out) = Na(+)(out) + 2 H(+)(in). Na(+)/H(+) antiporter that extrudes sodium in exchange for external protons. This Yersinia pestis bv. Antiqua (strain Angola) protein is Na(+)/H(+) antiporter NhaA.